Consider the following 285-residue polypeptide: 1-deoxypentalenic acid 11-beta-hydroxylase (285 aa).

R117 is a binding site for substrate. 2 residues coordinate Fe cation: H137 and D139. 2-oxoglutarate contacts are provided by residues 137-139 (HQD) and W153. R188 is a binding site for substrate. H226 serves as a coordination point for Fe cation. The 2-oxoglutarate site is built by S228 and R240.

The protein belongs to the PhyH family. Fe cation serves as cofactor. It depends on L-ascorbate as a cofactor.

The catalysed reaction is 1-deoxypentalenate + 2-oxoglutarate + O2 = 1-deoxy-11beta-hydroxypentalenate + succinate + CO2. It participates in antibiotic biosynthesis; neopentalenolactone biosynthesis. Its function is as follows. Catalyzes the conversion of 1-deoxypentalenic acid to 11-beta-hydroxy-1-deoxypentalenic acid in the biosynthesis of neopentalenolactone antibiotic. The chain is 1-deoxypentalenic acid 11-beta-hydroxylase (ptlH) from Streptomyces avermitilis (strain ATCC 31267 / DSM 46492 / JCM 5070 / NBRC 14893 / NCIMB 12804 / NRRL 8165 / MA-4680).